The chain runs to 1388 residues: Dicer-like protein 2 (1388 aa).

In terms of domain architecture, Helicase ATP-binding spans 23–203 (MLEASMKENI…LLTVESNLDA (181 aa)). Residue 36 to 43 (MDTGSGKT) participates in ATP binding. The DEAH box motif lies at 144-147 (DEAH). The region spanning 371–537 (SLLNFLDSLD…DDERQLQSVS (167 aa)) is the Helicase C-terminal domain. The region spanning 564–658 (AMAHLHHFCA…LPLTKRPELK (95 aa)) is the Dicer dsRNA-binding fold domain. 2 RNase III domains span residues 919-1059 (ATRL…MDGG) and 1098-1281 (NERL…VDSG). The Mg(2+) site is built by E1137, D1267, and E1270.

Belongs to the helicase family. Dicer subfamily. Mg(2+) is required as a cofactor. It depends on Mn(2+) as a cofactor.

Dicer-like endonuclease involved in cleaving double-stranded RNA in the RNA interference (RNAi) pathway. Produces 21 to 25 bp dsRNAs (siRNAs) which target the selective destruction of homologous RNAs leading to sequence-specific suppression of gene expression, called post-transcriptional gene silencing (PTGS). Part of a broad host defense response against viral infection and transposons. In Neosartorya fischeri (strain ATCC 1020 / DSM 3700 / CBS 544.65 / FGSC A1164 / JCM 1740 / NRRL 181 / WB 181) (Aspergillus fischerianus), this protein is Dicer-like protein 2 (dcl2).